The chain runs to 566 residues: Malate synthase, glyoxysomal (566 aa).

Arg-182 functions as the Proton acceptor in the catalytic mechanism. The Proton donor role is filled by Asp-467. The short motif at 564–566 is the Microbody targeting signal element; the sequence is SRL.

This sequence belongs to the malate synthase family.

It is found in the glyoxysome. It carries out the reaction glyoxylate + acetyl-CoA + H2O = (S)-malate + CoA + H(+). It functions in the pathway carbohydrate metabolism; glyoxylate cycle; (S)-malate from isocitrate: step 2/2. The polypeptide is Malate synthase, glyoxysomal (Cucurbita maxima (Pumpkin)).